The chain runs to 1604 residues: E3 ubiquitin-protein ligase HECW1 (1604 aa).

Positions 182–318 (SAAPIFKGIG…LERHAIGDRV (137 aa)) constitute a C2 domain. 4 disordered regions span residues 350–539 (DEEI…CSLP), 572–604 (PSAQ…LSEV), 642–667 (GIGA…QQGA), and 727–826 (STVF…TIDE). Residues 362–380 (SAETQDSIMNSMVGNSNGE) show a composition bias toward polar residues. The span at 387–396 (EFCKDAKPES) shows a compositional bias: basic and acidic residues. A compositionally biased stretch (polar residues) spans 398–412 (SEGNGVNSSENQNQE). Composition is skewed to acidic residues over residues 435 to 444 (APEEPGELQD) and 458 to 469 (EVAEGLPLDEDS). A compositionally biased stretch (basic and acidic residues) spans 494–505 (GAREEEMQKGKD). The span at 580 to 589 (TEEEDGLEEE) shows a compositional bias: acidic residues. A compositionally biased stretch (basic and acidic residues) spans 590-601 (STLKESSEKDGL). Polar residues-rich tracts occupy residues 654–667 (STGS…QQGA), 748–762 (DSVQ…STNG), and 803–812 (HNSQPISQLP). The 34-residue stretch at 826-859 (EPLPPNWEARIDSHGRVFYVDHINRTTTWQRPSM) folds into the WW 1 domain. S871 is modified (phosphoserine). Positions 871 to 898 (SVHQMEQLNRRYQNIQRTMATERAEEDS) form a coiled coil. The interval 890–936 (ATERAEEDSGNQNSEQIPDGGGGGGGGSDSEAESSQSSLDLRREGSL) is disordered. The span at 908 to 917 (DGGGGGGGGS) shows a compositional bias: gly residues. Residues S935 and S937 each carry the phosphoserine modification. Residues 1016-1049 (LELPRGWEIKTDHQGKSFFVDHNSRATTFIDPRI) form the WW 2 domain. The 336-residue stretch at 1269-1604 (SRKELQRNKL…VEETSTFGLE (336 aa)) folds into the HECT domain. The Glycyl thioester intermediate role is filled by C1572.

As to quaternary structure, interacts with DVL1 and SSR3. As to expression, predominantly expressed in neurons of the spinal cord.

It is found in the cytoplasm. It catalyses the reaction S-ubiquitinyl-[E2 ubiquitin-conjugating enzyme]-L-cysteine + [acceptor protein]-L-lysine = [E2 ubiquitin-conjugating enzyme]-L-cysteine + N(6)-ubiquitinyl-[acceptor protein]-L-lysine.. Its pathway is protein modification; protein ubiquitination. Functionally, E3 ubiquitin-protein ligase that mediates ubiquitination and subsequent degradation of DVL1. This is E3 ubiquitin-protein ligase HECW1 (Hecw1) from Mus musculus (Mouse).